Here is a 389-residue protein sequence, read N- to C-terminus: Na(+)/H(+) antiporter NhaA (389 aa).

The next 11 membrane-spanning stretches (helical) occupy residues 14–34 (AGGILLLVAVALAMLMANSPL), 59–79 (LILWINDGLMAVFFLLIGLEV), 95–115 (SLPTFAAIGGMLVPAGVYLLF), 124–144 (AGWAIPAATDIAFALGIMALL), 154–174 (VFLLALAIIDDLGVIVIIALF), 177–197 (TDLSTISLVIASLAIAGLVGL), 213–233 (LILWVAVLKSGVHATLAGVII), 257–277 (PWSTFFILPVFAFANAGVYVG), 292–312 (IALGLMLGKPIGVMVFSYIAV), 328–348 (IAPVAAMCGIGFTMSMFIASL), and 363–383 (LGTLIGSIMAALVGYFWLSKV).

It belongs to the NhaA Na(+)/H(+) (TC 2.A.33) antiporter family.

The protein localises to the cell inner membrane. It catalyses the reaction Na(+)(in) + 2 H(+)(out) = Na(+)(out) + 2 H(+)(in). Na(+)/H(+) antiporter that extrudes sodium in exchange for external protons. This is Na(+)/H(+) antiporter NhaA from Shewanella baltica (strain OS195).